The primary structure comprises 232 residues: MVLVCAGPGTGKSAFVLAYALKSKVPTLYFSADSDAFTQISRSVSILSGWSLERSTRAVREQSIEESIANDLDEIPIRFNYKASPSLDEIENALAAYDALYEDFPALIVVDNITNVRTESGDGDDPFSGLESLMDYLHEMARETGSCVIGLHHVTGPYNDGDKAIPLGGIKGQIGRVPEMVLTLHRESDGFGPDSLNVSTVKNRGGKSDPSGNDYAALEFIGDTMQINDFDH.

The chain is Gene 65 protein (65) from Mycobacterium phage D29 (Mycobacteriophage D29).